The chain runs to 61 residues: Putative neurotoxin-A (61 aa).

An N-terminal signal peptide occupies residues 1-19 (MKTVCGVFMVLLALTVLLA). 3 cysteine pairs are disulfide-bonded: Cys31–Cys50, Cys36–Cys55, and Cys40–Cys57.

Belongs to the short scorpion toxin superfamily. As to expression, expressed by the venom gland.

The protein resides in the secreted. The sequence is that of Putative neurotoxin-A from Lychas mucronatus (Chinese swimming scorpion).